We begin with the raw amino-acid sequence, 417 residues long: Oxidoreductase phnG (417 aa).

Residues 16–20 (GGSYA), Arg-61, and Asp-317 each bind 6-hydroxy-FAD.

This sequence belongs to the FAD-dependent oxidoreductase family. The cofactor is 6-hydroxy-FAD.

The enzyme catalyses deoxyherqueinone + NADPH + O2 + H(+) = herqueinone + NADP(+) + H2O. Its pathway is secondary metabolite biosynthesis. In terms of biological role, oxidoreductase; part of the gene cluster that mediates the biosynthesis of phenalenones such as herqueinone, compounds that have been reported to treat tumors, bacterial infections and/or mycoses, and rheumatic diseases. The non-reducing polyketide synthase phnA synthesizes the heptaketide backbone and cyclizes it into the angular, hemiketal-containing naphtho-gamma-pyrone prephenalenone. The product template (PT) domain of phnA catalyzes only the C4-C9 aldol condensation, which is unprecedented among known PT domains. The transformation of prephenalenone to phenalenones requires an FAD-dependent monooxygenase phnB, which catalyzes the C2 aromatic hydroxylation of prephenalenone and ring opening of the gamma-pyrone ring simultaneously. Subsequent intramolecular deprotonation of C3 phenolic oxygen accelerates phenalenone ring closure to yield the tricyclic phenalenone core with a C2 hydroxylation. The prenyltransferase phnF further catalyzes reverse C-prenylation of phenalenone by direct electrophilic substitution at C6, or possibly via first a forward O-prenylation of a neighboring phenol in phenalenone, followed by a Claisen rearrangement. The hydroalkoxylation enzyme phnH catalyzes the 5-exo-trig cyclization via acid catalysis after the spontaneous deprotonation of 7-OH, which leads to the formation of the dihydrobenzofuran atrovenetin. Atrovenetin is further converted to deoxyherqueinone by the O-methyltransferase phnC which can methylate C2-OH to stabilize the northern portion of the phenalenone core. Finally, the oxidoreductase phnG converts deoxyherqueinone to herqueinone via C6 hydroxylation. The polypeptide is Oxidoreductase phnG (Penicillium herquei).